The primary structure comprises 105 residues: Co-chaperonin GroES (105 aa).

Belongs to the GroES chaperonin family. In terms of assembly, heptamer of 7 subunits arranged in a ring. Interacts with the chaperonin GroEL.

Its subcellular location is the cytoplasm. Its function is as follows. Together with the chaperonin GroEL, plays an essential role in assisting protein folding. The GroEL-GroES system forms a nano-cage that allows encapsulation of the non-native substrate proteins and provides a physical environment optimized to promote and accelerate protein folding. GroES binds to the apical surface of the GroEL ring, thereby capping the opening of the GroEL channel. This Methylovorus sp. (strain SS1 / DSM 11726) protein is Co-chaperonin GroES.